The sequence spans 410 residues: Putative formamidase C869.04 (410 aa).

This sequence belongs to the acetamidase/formamidase family. Homotrimer.

The protein resides in the cytoplasm. The protein localises to the nucleus. It catalyses the reaction formamide + H2O = formate + NH4(+). In terms of biological role, hydrolyzes formamide with the production of ammonia which can be used as a source of nitrogen for growth. May also act on acetamide, propanamide and butanamide. In Schizosaccharomyces pombe (strain 972 / ATCC 24843) (Fission yeast), this protein is Putative formamidase C869.04.